Reading from the N-terminus, the 680-residue chain is Methionine--tRNA ligase (680 aa).

The short motif at 15 to 25 (PYANGPVHIGH) is the 'HIGH' region element. Zn(2+) is bound by residues C147, C150, C160, and C163. The 'KMSKS' region signature appears at 332-336 (KISTS). Residue T335 participates in ATP binding. A tRNA-binding domain is found at 579–680 (DFLKLDIRVG…AEVAAGSQVK (102 aa)).

This sequence belongs to the class-I aminoacyl-tRNA synthetase family. MetG type 1 subfamily. As to quaternary structure, homodimer. Requires Zn(2+) as cofactor.

It localises to the cytoplasm. The enzyme catalyses tRNA(Met) + L-methionine + ATP = L-methionyl-tRNA(Met) + AMP + diphosphate. Is required not only for elongation of protein synthesis but also for the initiation of all mRNA translation through initiator tRNA(fMet) aminoacylation. The polypeptide is Methionine--tRNA ligase (Porphyromonas gingivalis (strain ATCC BAA-308 / W83)).